The chain runs to 393 residues: MTTIGTPLRPNATKVMMLGSGELGKEVVIELQRLGVEVIAVDRYENAPAQQVAHRAYTISMLDGAALRALVEKEKPDFIVPEVEAIATATLVELEQEGYNVVPTAKATQLTMNREGIRRLAAEELGLKTSPYRFVDNLEDFKQAVAEIGIPCVVKPIMSSSGHGQSVIKSEDQIQQAWDYSQEGGRAGGGRVIVEGFIKFDYEITQLTVRHVNGTSFLAPIGHRQEDGDYRESWQPQAMSDLALKRAQETAERITTALGGRGIFGVELFVCGDEIIFNEVSPRPHDTGMVTMASQELSQFALHARAILGLPIPEIYQISPAASKAIVVEGKSNNMTFGNLDKVLEEIGTNIRLFGKGEVNGHRRLGVILARDENTEKALAKAERAYAKLAVQL.

N(1)-(5-phospho-beta-D-ribosyl)glycinamide is bound by residues 22 to 23 and glutamate 82; that span reads EL. ATP contacts are provided by residues arginine 114, lysine 155, 160 to 165, 195 to 198, and glutamate 203; these read SSGHGQ and EGFI. Residues 119 to 308 form the ATP-grasp domain; that stretch reads RLAAEELGLK…QFALHARAIL (190 aa). Mg(2+) contacts are provided by glutamate 267 and glutamate 279. Residues aspartate 286, lysine 356, and 363–364 each bind N(1)-(5-phospho-beta-D-ribosyl)glycinamide; that span reads RR.

The protein belongs to the PurK/PurT family. Homodimer.

The catalysed reaction is N(1)-(5-phospho-beta-D-ribosyl)glycinamide + formate + ATP = N(2)-formyl-N(1)-(5-phospho-beta-D-ribosyl)glycinamide + ADP + phosphate + H(+). The protein operates within purine metabolism; IMP biosynthesis via de novo pathway; N(2)-formyl-N(1)-(5-phospho-D-ribosyl)glycinamide from N(1)-(5-phospho-D-ribosyl)glycinamide (formate route): step 1/1. Functionally, involved in the de novo purine biosynthesis. Catalyzes the transfer of formate to 5-phospho-ribosyl-glycinamide (GAR), producing 5-phospho-ribosyl-N-formylglycinamide (FGAR). Formate is provided by PurU via hydrolysis of 10-formyl-tetrahydrofolate. The protein is Formate-dependent phosphoribosylglycinamide formyltransferase of Actinobacillus pleuropneumoniae serotype 5b (strain L20).